The chain runs to 186 residues: Elongation factor P (186 aa).

This sequence belongs to the elongation factor P family.

It localises to the cytoplasm. Its pathway is protein biosynthesis; polypeptide chain elongation. In terms of biological role, involved in peptide bond synthesis. Stimulates efficient translation and peptide-bond synthesis on native or reconstituted 70S ribosomes in vitro. Probably functions indirectly by altering the affinity of the ribosome for aminoacyl-tRNA, thus increasing their reactivity as acceptors for peptidyl transferase. This is Elongation factor P from Prochlorococcus marinus (strain MIT 9301).